Reading from the N-terminus, the 319-residue chain is D-alanine--D-alanine ligase (319 aa).

Residues 1-23 (MTGPEWAHTRGTKVGQSSRTPPK) form a disordered region. In terms of domain architecture, ATP-grasp spans 120–313 (KDAFVAAGLP…FGKLCAWMVE (194 aa)). 147–197 (MQPPYVVKPNNEGSSVGVYLVHEAANGPPQLSEDMPQEVMVEAFAPGRELT) serves as a coordination point for ATP. Mg(2+) is bound by residues Asp264, Glu280, and Asn282.

The protein belongs to the D-alanine--D-alanine ligase family. Mg(2+) is required as a cofactor. The cofactor is Mn(2+).

The protein resides in the cytoplasm. It carries out the reaction 2 D-alanine + ATP = D-alanyl-D-alanine + ADP + phosphate + H(+). It participates in cell wall biogenesis; peptidoglycan biosynthesis. Functionally, cell wall formation. The sequence is that of D-alanine--D-alanine ligase from Roseobacter denitrificans (strain ATCC 33942 / OCh 114) (Erythrobacter sp. (strain OCh 114)).